The sequence spans 168 residues: Vasopressin-neurophysin 2-copeptin (168 aa).

Positions 1 to 23 (MLARMLNTTLSACFLSLLAFSSA) are cleaved as a signal peptide. C24 and C29 are oxidised to a cystine. Residue G32 is modified to Glycine amide. Intrachain disulfides connect C45–C89, C48–C62, C56–C79, C63–C69, C96–C108, C102–C120, and C109–C114. A glycan (N-linked (GlcNAc...) asparagine) is linked at N135.

Belongs to the vasopressin/oxytocin family. Interacts with vasopressin receptors V1bR/AVPR1B (Ki=85 pM), V1aR/AVPR1A (Ki=0.6 nM) and V2R/AVPR2 (Ki=4.9 nM). Interacts with oxytocin receptor (OXTR) (Ki=110 nM).

The protein resides in the secreted. Its function is as follows. Neurophysin 2 specifically binds vasopressin. In terms of biological role, vasopressin has a direct antidiuretic action on the kidney, it also causes vasoconstriction of the peripheral vessels. Acts by binding to vasopressin receptors (V1bR/AVPR1B, V1aR/AVPR1A, and V2R/AVPR2). The chain is Vasopressin-neurophysin 2-copeptin (Avp) from Mus musculus (Mouse).